We begin with the raw amino-acid sequence, 772 residues long: Transducin-like enhancer protein 4 (772 aa).

Disordered stretches follow at residues 1–24 and 183–359; these read MIRD…PAQP and LPIK…LTGL. Residues 1-137 are q domain; the sequence is MIRDLSKMYP…AIIGQQLQAQ (137 aa). The segment at 138–205 is GP domain; sequence HLSHAHGLPV…HQRDRDSIKS (68 aa). The span at 184–203 shows a compositional bias: basic and acidic residues; that stretch reads PIKDEKKHHDSDHQRDRDSI. Over residues 204–213 the composition is skewed to low complexity; that stretch reads KSSSVSPSAS. Positions 206-275 are ccN domain; that stretch reads SSVSPSASFR…SPRGSPAHSP (70 aa). Composition is skewed to basic and acidic residues over residues 216-253 and 274-290; these read AAEK…KSDD and SPRE…KKDA. Residues 276–452 are SP domain; it reads RENGLDKPRL…GGKPAYSFHV (177 aa). Residues 291–306 show a composition bias toward low complexity; it reads PISPASIASSSSTPSS. A compositionally biased stretch (basic and acidic residues) spans 307–316; sequence KSKEHSHNEK. Polar residues predominate over residues 318–329; that stretch reads TTPVSKSNTPTP. 7 WD repeats span residues 484-522, 530-569, 574-613, 616-655, 657-696, 698-737, and 739-772; these read NHGE…NKSP, NRDN…PRIK, SSAP…LVRQ, GHTD…QLQQ, DFTS…KYQL, LHES…SIFQ, and KESS…EVIY.

It belongs to the WD repeat Groucho/TLE family. As to quaternary structure, interacts with tcf7, tcf7l1, ripply2.2/bowline, dscr6/ripply3 and foxd3. Associates with tbx6 in the presence of ripply2.2/bowline. Interacts with EFNB1 through the SP domain. Ubiquitinated by XIAP/BIRC4. As to expression, expressed at high levels in the spleen and ovary.

It localises to the nucleus. Its function is as follows. Transcriptional corepressor. Functions with ripply2.2/bowline to down regulate transcription of tbx6-dependent gene expression. Represses transcription of siamois and nodal3. The protein is Transducin-like enhancer protein 4 (tle4) of Xenopus laevis (African clawed frog).